Here is a 345-residue protein sequence, read N- to C-terminus: Protein RecA (345 aa).

80 to 87 lines the ATP pocket; sequence GPESSGKT.

The protein belongs to the RecA family.

The protein resides in the cytoplasm. In terms of biological role, can catalyze the hydrolysis of ATP in the presence of single-stranded DNA, the ATP-dependent uptake of single-stranded DNA by duplex DNA, and the ATP-dependent hybridization of homologous single-stranded DNAs. It interacts with LexA causing its activation and leading to its autocatalytic cleavage. This chain is Protein RecA, found in Mycoplasma mycoides subsp. mycoides SC (strain CCUG 32753 / NCTC 10114 / PG1).